Reading from the N-terminus, the 250-residue chain is 2,3-bisphosphoglycerate-dependent phosphoglycerate mutase (250 aa).

Substrate contacts are provided by residues 10 to 17, 23 to 24, Arg62, 89 to 92, Lys100, 116 to 117, and 185 to 186; these read RHGESQWN, TG, ERHY, RR, and GN. The Tele-phosphohistidine intermediate role is filled by His11. The active-site Proton donor/acceptor is the Glu89.

The protein belongs to the phosphoglycerate mutase family. BPG-dependent PGAM subfamily. As to quaternary structure, homodimer.

The enzyme catalyses (2R)-2-phosphoglycerate = (2R)-3-phosphoglycerate. It participates in carbohydrate degradation; glycolysis; pyruvate from D-glyceraldehyde 3-phosphate: step 3/5. In terms of biological role, catalyzes the interconversion of 2-phosphoglycerate and 3-phosphoglycerate. The chain is 2,3-bisphosphoglycerate-dependent phosphoglycerate mutase from Pectobacterium atrosepticum (strain SCRI 1043 / ATCC BAA-672) (Erwinia carotovora subsp. atroseptica).